We begin with the raw amino-acid sequence, 504 residues long: Maturase K (504 aa).

Belongs to the intron maturase 2 family. MatK subfamily.

It localises to the plastid. The protein localises to the chloroplast. Its function is as follows. Usually encoded in the trnK tRNA gene intron. Probably assists in splicing its own and other chloroplast group II introns. This is Maturase K from Barbarea vulgaris (Yellow rocket).